A 699-amino-acid chain; its full sequence is Polyribonucleotide nucleotidyltransferase (699 aa).

Residues D485 and D491 each coordinate Mg(2+). A KH domain is found at 552–611 (PRITTIKINPEKIRDVIGKGGAVIRALTEETGTTIELEDDGTVRIASSNGEATKEAIRRI). One can recognise an S1 motif domain in the interval 621–689 (GRIYNGKVIR…RQGRVRLSIK (69 aa)).

The protein belongs to the polyribonucleotide nucleotidyltransferase family. In terms of assembly, component of the RNA degradosome, which is a multiprotein complex involved in RNA processing and mRNA degradation. It depends on Mg(2+) as a cofactor.

It localises to the cytoplasm. The catalysed reaction is RNA(n+1) + phosphate = RNA(n) + a ribonucleoside 5'-diphosphate. In terms of biological role, involved in mRNA degradation. Catalyzes the phosphorolysis of single-stranded polyribonucleotides processively in the 3'- to 5'-direction. In Shewanella sp. (strain W3-18-1), this protein is Polyribonucleotide nucleotidyltransferase.